A 150-amino-acid chain; its full sequence is MSLQFNPIGLFLVALILLGVLGNNNSITISATLLLLMQQTALNKYIPMLEKYGLTIGIIILTIGVLSPIVSGKINLPNLSEILSWKMALAISIGIFVAWLGGRGINLMATQPLIITGLLIGTIIGIAFFGGIPVGPLIAAGIMSLLVGKL.

The next 4 helical transmembrane spans lie at 1 to 21, 52 to 72, 82 to 102, and 114 to 134; these read MSLQ…LGVL, YGLT…IVSG, ILSW…WLGG, and IITG…GIPV.

This sequence belongs to the UPF0756 family.

Its subcellular location is the cell membrane. The sequence is that of UPF0756 membrane protein HD_1071 from Haemophilus ducreyi (strain 35000HP / ATCC 700724).